Reading from the N-terminus, the 290-residue chain is Proteasome subunit beta (290 aa).

The propeptide at 1–58 (MTTSGGLTGPGAFGRLPQPFHQPGITSFVEFLALQAPDLLPGRLQMPAGGQPPEVPHG) is removed in mature form; by autocatalysis. Thr59 functions as the Nucleophile in the catalytic mechanism.

Belongs to the peptidase T1B family. The 20S proteasome core is composed of 14 alpha and 14 beta subunits that assemble into four stacked heptameric rings, resulting in a barrel-shaped structure. The two inner rings, each composed of seven catalytic beta subunits, are sandwiched by two outer rings, each composed of seven alpha subunits. The catalytic chamber with the active sites is on the inside of the barrel. Has a gated structure, the ends of the cylinder being occluded by the N-termini of the alpha-subunits. Is capped by the proteasome-associated ATPase, ARC.

Its subcellular location is the cytoplasm. The catalysed reaction is Cleavage of peptide bonds with very broad specificity.. It participates in protein degradation; proteasomal Pup-dependent pathway. With respect to regulation, the formation of the proteasomal ATPase ARC-20S proteasome complex, likely via the docking of the C-termini of ARC into the intersubunit pockets in the alpha-rings, may trigger opening of the gate for substrate entry. Interconversion between the open-gate and close-gate conformations leads to a dynamic regulation of the 20S proteasome proteolysis activity. Functionally, component of the proteasome core, a large protease complex with broad specificity involved in protein degradation. The chain is Proteasome subunit beta from Acidothermus cellulolyticus (strain ATCC 43068 / DSM 8971 / 11B).